The following is a 467-amino-acid chain: Chromosomal replication initiator protein DnaA (467 aa).

Positions 1-85 are domain I, interacts with DnaA modulators; that stretch reads MTTTLWPQVL…LEVGEYAIES (85 aa). A domain II region spans residues 85-130; it reads SFNEPENTSVPQPLRETKAEREAAEKAASSTSKKKSDSPPKKTIKH. The segment at 87-129 is disordered; it reads NEPENTSVPQPLRETKAEREAAEKAASSTSKKKSDSPPKKTIK. A compositionally biased stretch (basic and acidic residues) spans 99–109; sequence RETKAEREAAE. The tract at residues 131 to 347 is domain III, AAA+ region; that stretch reads NLNTNFTFDT…GALKRVGAFA (217 aa). Residues Gly-175, Gly-177, Lys-178, and Thr-179 each coordinate ATP. The interval 348-467 is domain IV, binds dsDNA; it reads QFTQQLVTVD…FNSLIRIITN (120 aa).

This sequence belongs to the DnaA family. In terms of assembly, oligomerizes as a right-handed, spiral filament on DNA at oriC.

Its subcellular location is the cytoplasm. Plays an essential role in the initiation and regulation of chromosomal replication. ATP-DnaA binds to the origin of replication (oriC) to initiate formation of the DNA replication initiation complex once per cell cycle. Binds the DnaA box (a 9 base pair repeat at the origin) and separates the double-stranded (ds)DNA. Forms a right-handed helical filament on oriC DNA; dsDNA binds to the exterior of the filament while single-stranded (ss)DNA is stabiized in the filament's interior. The ATP-DnaA-oriC complex binds and stabilizes one strand of the AT-rich DNA unwinding element (DUE), permitting loading of DNA polymerase. After initiation quickly degrades to an ADP-DnaA complex that is not apt for DNA replication. Binds acidic phospholipids. This chain is Chromosomal replication initiator protein DnaA, found in Hydrogenovibrio crunogenus (strain DSM 25203 / XCL-2) (Thiomicrospira crunogena).